Here is a 453-residue protein sequence, read N- to C-terminus: Bifunctional protein GlmU (453 aa).

Residues 1 to 225 (MNIVILAAGT…EWETLGVNSK (225 aa)) are pyrophosphorylase. Residues 6–9 (LAAG), Lys20, Gln71, 76–77 (GT), 98–100 (YGD), Gly135, Glu150, Asn165, and Asn223 each bind UDP-N-acetyl-alpha-D-glucosamine. Residue Asp100 participates in Mg(2+) binding. Residue Asn223 participates in Mg(2+) binding. The segment at 226–246 (AQLAELERIHQRTIADALLVD) is linker. The interval 247–453 (GVTLADPARV…GYVRPVKKKS (207 aa)) is N-acetyltransferase. 2 residues coordinate UDP-N-acetyl-alpha-D-glucosamine: Arg329 and Lys347. His359 functions as the Proton acceptor in the catalytic mechanism. Residues Tyr362 and Asn373 each contribute to the UDP-N-acetyl-alpha-D-glucosamine site. Acetyl-CoA contacts are provided by residues Ala376, 382–383 (NY), Ser401, and Ala419.

This sequence in the N-terminal section; belongs to the N-acetylglucosamine-1-phosphate uridyltransferase family. It in the C-terminal section; belongs to the transferase hexapeptide repeat family. As to quaternary structure, homotrimer. The cofactor is Mg(2+).

It is found in the cytoplasm. It catalyses the reaction alpha-D-glucosamine 1-phosphate + acetyl-CoA = N-acetyl-alpha-D-glucosamine 1-phosphate + CoA + H(+). The catalysed reaction is N-acetyl-alpha-D-glucosamine 1-phosphate + UTP + H(+) = UDP-N-acetyl-alpha-D-glucosamine + diphosphate. The protein operates within nucleotide-sugar biosynthesis; UDP-N-acetyl-alpha-D-glucosamine biosynthesis; N-acetyl-alpha-D-glucosamine 1-phosphate from alpha-D-glucosamine 6-phosphate (route II): step 2/2. It functions in the pathway nucleotide-sugar biosynthesis; UDP-N-acetyl-alpha-D-glucosamine biosynthesis; UDP-N-acetyl-alpha-D-glucosamine from N-acetyl-alpha-D-glucosamine 1-phosphate: step 1/1. Its pathway is bacterial outer membrane biogenesis; LPS lipid A biosynthesis. Its function is as follows. Catalyzes the last two sequential reactions in the de novo biosynthetic pathway for UDP-N-acetylglucosamine (UDP-GlcNAc). The C-terminal domain catalyzes the transfer of acetyl group from acetyl coenzyme A to glucosamine-1-phosphate (GlcN-1-P) to produce N-acetylglucosamine-1-phosphate (GlcNAc-1-P), which is converted into UDP-GlcNAc by the transfer of uridine 5-monophosphate (from uridine 5-triphosphate), a reaction catalyzed by the N-terminal domain. The chain is Bifunctional protein GlmU from Burkholderia ambifaria (strain MC40-6).